The primary structure comprises 239 residues: Demethylmenaquinone methyltransferase (239 aa).

Residues Thr68, Asp86, and Asn111–Gly112 contribute to the S-adenosyl-L-methionine site.

This sequence belongs to the class I-like SAM-binding methyltransferase superfamily. MenG/UbiE family.

The enzyme catalyses a 2-demethylmenaquinol + S-adenosyl-L-methionine = a menaquinol + S-adenosyl-L-homocysteine + H(+). It participates in quinol/quinone metabolism; menaquinone biosynthesis; menaquinol from 1,4-dihydroxy-2-naphthoate: step 2/2. In terms of biological role, methyltransferase required for the conversion of demethylmenaquinol (DMKH2) to menaquinol (MKH2). This chain is Demethylmenaquinone methyltransferase, found in Tropheryma whipplei (strain TW08/27) (Whipple's bacillus).